Reading from the N-terminus, the 243-residue chain is ATP-dependent dethiobiotin synthetase BioD (243 aa).

An ATP-binding site is contributed by 12–17 (DVGKTF). Residue threonine 16 coordinates Mg(2+). Residue lysine 37 is part of the active site. Serine 41 is a substrate binding site. Residues aspartate 54, 115–118 (EGCG), and 179–180 (NM) each bind ATP. Residues aspartate 54 and glutamate 115 each coordinate Mg(2+).

This sequence belongs to the dethiobiotin synthetase family. Homodimer. The cofactor is Mg(2+).

It localises to the cytoplasm. The catalysed reaction is (7R,8S)-7,8-diammoniononanoate + CO2 + ATP = (4R,5S)-dethiobiotin + ADP + phosphate + 3 H(+). It participates in cofactor biosynthesis; biotin biosynthesis; biotin from 7,8-diaminononanoate: step 1/2. In terms of biological role, catalyzes a mechanistically unusual reaction, the ATP-dependent insertion of CO2 between the N7 and N8 nitrogen atoms of 7,8-diaminopelargonic acid (DAPA, also called 7,8-diammoniononanoate) to form a ureido ring. The sequence is that of ATP-dependent dethiobiotin synthetase BioD from Caldicellulosiruptor bescii (strain ATCC BAA-1888 / DSM 6725 / KCTC 15123 / Z-1320) (Anaerocellum thermophilum).